A 621-amino-acid chain; its full sequence is MRRSVCYVTPSVARAGQISTWRFEYSSANFLPEGTLLKFDLGIDGRPIDWEIPSTDLSQPCNTIYLETPSEDIVAAKAVYAPGGYIPTFEFTLPCDVEAGDTFSIILGSSPNFPQEDSSGNGAQLFTQRRKPFSLYVDPSGKGSFEDPDIFTMDIRGNVLKNIRIFAPSYVIKNKRFDITVRFEDEFGNLTNFSPEETHIELSYEHLRENLNWQLFIPETGFVILPNLYFNEPGIYRIQLRNQATKEVFTSAPIKCFAETSSHLLWGLLHGESERVDSEGNIESCLRYFRDDCALNFFATSSFEIQDGLTPETIKTINQTVADFNEEDRFIALSGAQYLSEEPGEGIREVLLMKEPKSPGKHKECKLFPLSKLYKQSTSHELISIPSFTASKKFGYNFNNFHPEFERVVEIYNAWGCSERTEAEGNPFPIKGSIDSENPEGTVLSALKRNLRFGFVAGGLDDRNLYNHFFDSDQQQYSPGLTAVICNKYSRDSLLEALYQRQCYATTGQRIIVNFQITSAPMGSELSTAIKPGLVINRHISGYVAGTAKIASIEIIRNEDILHTFHPDGNNFEYEYDDLSPFAQVTLKDPQNGAPFAFYYLRVTQENGAMAWSSPIWIDLN.

A signal peptide spans 1 to 15 (MRRSVCYVTPSVARA).

Belongs to the chlamydial CPn_0512/CT_425/TC_0708 family.

This is an uncharacterized protein from Chlamydia trachomatis serovar D (strain ATCC VR-885 / DSM 19411 / UW-3/Cx).